The primary structure comprises 176 residues: Adenine phosphoribosyltransferase (176 aa).

Belongs to the purine/pyrimidine phosphoribosyltransferase family. Homodimer.

The protein resides in the cytoplasm. The enzyme catalyses AMP + diphosphate = 5-phospho-alpha-D-ribose 1-diphosphate + adenine. Its pathway is purine metabolism; AMP biosynthesis via salvage pathway; AMP from adenine: step 1/1. In terms of biological role, catalyzes a salvage reaction resulting in the formation of AMP, that is energically less costly than de novo synthesis. This chain is Adenine phosphoribosyltransferase, found in Methylobacillus flagellatus (strain ATCC 51484 / DSM 6875 / VKM B-1610 / KT).